Here is a 448-residue protein sequence, read N- to C-terminus: tRNA modification GTPase MnmE (448 aa).

Arginine 25, glutamate 82, and lysine 121 together coordinate (6S)-5-formyl-5,6,7,8-tetrahydrofolate. One can recognise a TrmE-type G domain in the interval 217–372 (GLTTVIAGRP…LRQEIIRRAG (156 aa)). K(+) is bound at residue asparagine 227. Residues 227 to 232 (NVGKSS), 246 to 252 (TEIPGTT), 271 to 274 (DTAG), and 353 to 355 (SAR) contribute to the GTP site. Serine 231 is a Mg(2+) binding site. K(+) is bound by residues threonine 246, isoleucine 248, and threonine 251. Threonine 252 provides a ligand contact to Mg(2+). Residue lysine 448 participates in (6S)-5-formyl-5,6,7,8-tetrahydrofolate binding.

This sequence belongs to the TRAFAC class TrmE-Era-EngA-EngB-Septin-like GTPase superfamily. TrmE GTPase family. In terms of assembly, homodimer. Heterotetramer of two MnmE and two MnmG subunits. It depends on K(+) as a cofactor.

It is found in the cytoplasm. In terms of biological role, exhibits a very high intrinsic GTPase hydrolysis rate. Involved in the addition of a carboxymethylaminomethyl (cmnm) group at the wobble position (U34) of certain tRNAs, forming tRNA-cmnm(5)s(2)U34. This is tRNA modification GTPase MnmE from Methylococcus capsulatus (strain ATCC 33009 / NCIMB 11132 / Bath).